The sequence spans 2729 residues: 3-methylorcinaldehyde synthase (2729 aa).

Residues Leu-99–Leu-238 form an N-terminal acylcarrier protein transacylase domain (SAT) region. Polar residues predominate over residues Ser-361–Gly-373. Residues Ser-361 to His-391 are disordered. Residues Asp-397–Gln-828 form the Ketosynthase family 3 (KS3) domain. Residues Cys-571, His-706, and His-748 each act as for beta-ketoacyl synthase activity in the active site. A malonyl-CoA:ACP transacylase (MAT) domain region spans residues Phe-942–Val-1230. The For acyl/malonyl transferase activity role is filled by Ser-1029. Residues Glu-1345–Asp-1479 are N-terminal hotdog fold. The PKS/mFAS DH domain maps to Glu-1345 to Glu-1669. The segment at Lys-1374 to Arg-1665 is product template (PT) domain. His-1380 (proton acceptor; for dehydratase activity) is an active-site residue. The interval Asp-1513 to Glu-1669 is C-terminal hotdog fold. Asp-1575 acts as the Proton donor; for dehydratase activity in catalysis. Residues Ala-1682–Ala-1701 show a composition bias toward low complexity. Residues Ala-1682–Gly-1726 are disordered. The span at Thr-1707–Gly-1716 shows a compositional bias: polar residues. Positions Gln-1750–Leu-1824 constitute a Carrier domain. Residue Ser-1784 is modified to O-(pantetheine 4'-phosphoryl)serine. The span at Thr-1835–Ser-1868 shows a compositional bias: low complexity. The segment at Thr-1835–Met-1874 is disordered. Residues Glu-2086 to Thr-2254 form a methyltransferase (C-MeT) domain region. Residues Ile-2344–Arg-2599 are reductase (R) domain.

Its pathway is secondary metabolite biosynthesis; terpenoid biosynthesis. Its function is as follows. Non-reducing polyketide synthase; part of the gene cluster that mediates the biosynthesis of xenovulene A, an unusual meroterpenoid that has potent inhibitory effects on the human gamma-aminobutyrate A (GABAA) benzodiazepine receptor. The first step of xenovulene A biosynthesis is the biosynthesis of 3-methylorcinaldehyde performed by the non-reducing polyketide synthase aspks1. The salicylate hydroxylase asL1 then catalyzes the oxidative dearomatization of 3-methylorcinaldehyde to yield a dearomatized hydroxycyclohexadione. The 2-oxoglutarate-dependent dioxygenase asL3 further catalyzes the oxidative ring expansion to provide the first tropolone metabolite. The cytochrome P450 monooxygenase asR2 allows the synthesis of tropolone hemiacetal. In parallel, a previously unrecognised class of terpene cyclase, asR6, produces alpha-humulene from farnesylpyrophosphate (FPP). The putative Diels-Alderase asR5 probably catalyzes the formation of the tropolone-humulene skeleton by linking humulene and the polyketide moiety. Oxidative-ring contractions catalyzed by asL4 and asL6 then processively remove carbon atoms from the polyketide to yield xenovulene A. This chain is 3-methylorcinaldehyde synthase, found in Sarocladium schorii (Acremonium strictum (strain IMI 501407)).